Here is a 336-residue protein sequence, read N- to C-terminus: Iron(3+)-hydroxamate import system permease protein FhuG (336 aa).

9 consecutive transmembrane segments (helical) span residues 9–29 (LIVMAVTFLLIVVVFFISLNL), 63–83 (IILSLLVGAGISVAGAILQSV), 91–111 (PGILGINAGGSLAVVLFIYFF), 124–144 (FMLPFSALAGAILAAFLIYIL), 155–175 (LILVGIGVNAGFNALLLIFQL), 193–213 (IWGANWNMIWAILPWIVILLL), 245–265 (ILLLAAVTLAASCVAAAGGIA), 285–305 (TLIPVSAFIGSFLFLLADTLA), and 313–333 (EIPVGLVISVLGAPYFIYLLM).

It belongs to the binding-protein-dependent transport system permease family. FecCD subfamily. In terms of assembly, the complex is composed of an ATP-binding protein (FhuC), two transmembrane proteins (FhuB and FhuG) and a solute-binding protein (FhuD or YxeB).

It localises to the cell membrane. In terms of biological role, part of the ABC transporter complex FhuBGCD involved in iron(3+)-hydroxamate import. Responsible for the translocation of the substrate across the membrane. The polypeptide is Iron(3+)-hydroxamate import system permease protein FhuG (fhuG) (Bacillus subtilis (strain 168)).